The following is a 362-amino-acid chain: Ribosomal RNA large subunit methyltransferase M (362 aa).

Residues Ser194, 227 to 230 (CPGG), Asp246, Asp266, and Asp284 contribute to the S-adenosyl-L-methionine site. The active-site Proton acceptor is Lys313.

Belongs to the class I-like SAM-binding methyltransferase superfamily. RNA methyltransferase RlmE family. RlmM subfamily. As to quaternary structure, monomer.

It localises to the cytoplasm. The catalysed reaction is cytidine(2498) in 23S rRNA + S-adenosyl-L-methionine = 2'-O-methylcytidine(2498) in 23S rRNA + S-adenosyl-L-homocysteine + H(+). Its function is as follows. Catalyzes the 2'-O-methylation at nucleotide C2498 in 23S rRNA. This Aggregatibacter aphrophilus (strain NJ8700) (Haemophilus aphrophilus) protein is Ribosomal RNA large subunit methyltransferase M.